We begin with the raw amino-acid sequence, 352 residues long: Outer membrane protein assembly factor BamC (352 aa).

Residues 1 to 19 form the signal peptide; that stretch reads MQYWIPKALAVSVLVSLSG. Residue Cys20 is the site of N-palmitoyl cysteine attachment. Cys20 carries the S-diacylglycerol cysteine lipid modification.

Belongs to the BamC family. In terms of assembly, part of the Bam complex.

The protein localises to the cell outer membrane. Part of the outer membrane protein assembly complex, which is involved in assembly and insertion of beta-barrel proteins into the outer membrane. This Pseudoalteromonas sp. (strain SM9913) protein is Outer membrane protein assembly factor BamC.